The primary structure comprises 70 residues: DNA-directed RNA polymerase subunit omega (70 aa).

Belongs to the RNA polymerase subunit omega family. The RNAP catalytic core consists of 2 alpha, 1 beta, 1 beta' and 1 omega subunit. When a sigma factor is associated with the core the holoenzyme is formed, which can initiate transcription.

The catalysed reaction is RNA(n) + a ribonucleoside 5'-triphosphate = RNA(n+1) + diphosphate. In terms of biological role, promotes RNA polymerase assembly. Latches the N- and C-terminal regions of the beta' subunit thereby facilitating its interaction with the beta and alpha subunits. In Staphylococcus haemolyticus (strain JCSC1435), this protein is DNA-directed RNA polymerase subunit omega.